The chain runs to 106 residues: PTS system fructose-like EIIB component 2 (106 aa).

The PTS EIIB type-2 domain occupies 1-103 (MTKIIAVTAC…IMSKIEAHLA (103 aa)). C10 functions as the Phosphocysteine intermediate in the catalytic mechanism. C10 carries the phosphocysteine; by EIIA modification.

Its subcellular location is the cytoplasm. It catalyses the reaction D-fructose(out) + N(pros)-phospho-L-histidyl-[protein] = D-fructose 1-phosphate(in) + L-histidyl-[protein]. The phosphoenolpyruvate-dependent sugar phosphotransferase system (sugar PTS), a major carbohydrate active transport system, catalyzes the phosphorylation of incoming sugar substrates concomitantly with their translocation across the cell membrane. The enzyme II FrwABC PTS system is involved in fructose transport. The sequence is that of PTS system fructose-like EIIB component 2 (frwB) from Escherichia coli O157:H7.